The sequence spans 747 residues: Polyribonucleotide nucleotidyltransferase (747 aa).

Residues D487 and D493 each coordinate Mg(2+). The 60-residue stretch at 554-613 (PSTTTIKIDKDKIRDIIGPGGKIIKEICETSGAKIDISDDGTVSVYAADRDKLKIASDKI) folds into the KH domain. The 69-residue stretch at 623–691 (GEIFNGTVTK…NKGKAKLTIK (69 aa)) folds into the S1 motif domain. The interval 694–716 (DKDKSLNNPKPQNSINNAKENSE) is disordered. Over residues 699 to 712 (LNNPKPQNSINNAK) the composition is skewed to polar residues.

Belongs to the polyribonucleotide nucleotidyltransferase family. Mg(2+) serves as cofactor.

It localises to the cytoplasm. It carries out the reaction RNA(n+1) + phosphate = RNA(n) + a ribonucleoside 5'-diphosphate. Involved in mRNA degradation. Catalyzes the phosphorolysis of single-stranded polyribonucleotides processively in the 3'- to 5'-direction. The sequence is that of Polyribonucleotide nucleotidyltransferase from Rickettsia canadensis (strain McKiel).